A 291-amino-acid polypeptide reads, in one-letter code: N-acetylmannosamine kinase (291 aa).

ATP contacts are provided by residues 5–12 and 132–139; these read AIDIGGTK and GVGGGVVS. Zn(2+) contacts are provided by histidine 156, cysteine 166, cysteine 168, and cysteine 173.

This sequence belongs to the ROK (NagC/XylR) family. NanK subfamily. In terms of assembly, homodimer.

The catalysed reaction is an N-acyl-D-mannosamine + ATP = an N-acyl-D-mannosamine 6-phosphate + ADP + H(+). It participates in amino-sugar metabolism; N-acetylneuraminate degradation; D-fructose 6-phosphate from N-acetylneuraminate: step 2/5. Functionally, catalyzes the phosphorylation of N-acetylmannosamine (ManNAc) to ManNAc-6-P. This chain is N-acetylmannosamine kinase, found in Escherichia fergusonii (strain ATCC 35469 / DSM 13698 / CCUG 18766 / IAM 14443 / JCM 21226 / LMG 7866 / NBRC 102419 / NCTC 12128 / CDC 0568-73).